The chain runs to 262 residues: tRNA pseudouridine synthase A (262 aa).

Residue D51 is the Nucleophile of the active site. Position 109 (Y109) interacts with substrate.

This sequence belongs to the tRNA pseudouridine synthase TruA family. Homodimer.

It catalyses the reaction uridine(38/39/40) in tRNA = pseudouridine(38/39/40) in tRNA. Its function is as follows. Formation of pseudouridine at positions 38, 39 and 40 in the anticodon stem and loop of transfer RNAs. This Actinobacillus pleuropneumoniae serotype 3 (strain JL03) protein is tRNA pseudouridine synthase A.